The sequence spans 366 residues: tRNA-specific 2-thiouridylase MnmA (366 aa).

Residues 6–13 (AMSGGVDS) and Leu-32 each bind ATP. Cys-101 (nucleophile) is an active-site residue. Cys-101 and Cys-199 form a disulfide bridge. Gly-125 serves as a coordination point for ATP. The segment at 148–150 (KDQ) is interaction with tRNA. The active-site Cysteine persulfide intermediate is Cys-199.

It belongs to the MnmA/TRMU family.

It is found in the cytoplasm. It catalyses the reaction S-sulfanyl-L-cysteinyl-[protein] + uridine(34) in tRNA + AH2 + ATP = 2-thiouridine(34) in tRNA + L-cysteinyl-[protein] + A + AMP + diphosphate + H(+). Functionally, catalyzes the 2-thiolation of uridine at the wobble position (U34) of tRNA, leading to the formation of s(2)U34. The chain is tRNA-specific 2-thiouridylase MnmA from Leifsonia xyli subsp. xyli (strain CTCB07).